We begin with the raw amino-acid sequence, 458 residues long: Adenylosuccinate synthetase (458 aa).

GTP is bound by residues 17-23 (GDEGKGK) and 45-47 (GHT). Aspartate 18 acts as the Proton acceptor in catalysis. Aspartate 18 and glycine 45 together coordinate Mg(2+). Residues 18 to 21 (DEGK), 43 to 46 (NAGH), threonine 137, arginine 151, glutamine 247, threonine 262, and arginine 330 each bind IMP. Catalysis depends on histidine 46, which acts as the Proton donor. 326–332 (VTTGRSR) lines the substrate pocket. GTP contacts are provided by residues arginine 332, 358–360 (KLD), and 440–442 (STS).

This sequence belongs to the adenylosuccinate synthetase family. Homodimer. Mg(2+) is required as a cofactor.

It is found in the cytoplasm. It carries out the reaction IMP + L-aspartate + GTP = N(6)-(1,2-dicarboxyethyl)-AMP + GDP + phosphate + 2 H(+). It functions in the pathway purine metabolism; AMP biosynthesis via de novo pathway; AMP from IMP: step 1/2. In terms of biological role, plays an important role in the de novo pathway of purine nucleotide biosynthesis. Catalyzes the first committed step in the biosynthesis of AMP from IMP. The protein is Adenylosuccinate synthetase of Acidovorax ebreus (strain TPSY) (Diaphorobacter sp. (strain TPSY)).